A 163-amino-acid chain; its full sequence is MKQKAIYPGTFDPFTNGHLDVLERALNIFEEVIVVIAENCQKHALFTIEEREAMTREVTCDYPGVTVEVLHRGLLADYARQVGARAIVRGVRQVKDFEYEFQMSLLNRQLYPEVTTVFLMPNVKYTYVASSIIKEVAMLGGDVSKFVHPCVLEMMHQKREEQN.

T10 is a substrate binding site. ATP contacts are provided by residues 10–11 (TF) and H18. Residues K42, L75, and R89 each contribute to the substrate site. ATP-binding positions include 90–92 (GVR), E100, and 125–131 (YTYVASS).

It belongs to the bacterial CoaD family. As to quaternary structure, homohexamer. Mg(2+) serves as cofactor.

The protein resides in the cytoplasm. The enzyme catalyses (R)-4'-phosphopantetheine + ATP + H(+) = 3'-dephospho-CoA + diphosphate. The protein operates within cofactor biosynthesis; coenzyme A biosynthesis; CoA from (R)-pantothenate: step 4/5. Its function is as follows. Reversibly transfers an adenylyl group from ATP to 4'-phosphopantetheine, yielding dephospho-CoA (dPCoA) and pyrophosphate. This chain is Phosphopantetheine adenylyltransferase, found in Pelodictyon phaeoclathratiforme (strain DSM 5477 / BU-1).